The following is a 419-amino-acid chain: Tyrosine--tRNA ligase (419 aa).

Tyr34 is an L-tyrosine binding site. The short motif at 39-48 is the 'HIGH' region element; sequence PSGDSMHIGH. L-tyrosine contacts are provided by Tyr168 and Gln172. A 'KMSKS' region motif is present at residues 230 to 234; that stretch reads KFGKS. Lys233 contributes to the ATP binding site. Positions 352–418 constitute an S4 RNA-binding domain; it reads VNLVDWLVTL…GKKKYFLVSY (67 aa).

Belongs to the class-I aminoacyl-tRNA synthetase family. TyrS type 1 subfamily. As to quaternary structure, homodimer.

It is found in the cytoplasm. The catalysed reaction is tRNA(Tyr) + L-tyrosine + ATP = L-tyrosyl-tRNA(Tyr) + AMP + diphosphate + H(+). Its function is as follows. Catalyzes the attachment of tyrosine to tRNA(Tyr) in a two-step reaction: tyrosine is first activated by ATP to form Tyr-AMP and then transferred to the acceptor end of tRNA(Tyr). The protein is Tyrosine--tRNA ligase of Listeria innocua serovar 6a (strain ATCC BAA-680 / CLIP 11262).